A 208-amino-acid chain; its full sequence is Uracil phosphoribosyltransferase (208 aa).

5-phospho-alpha-D-ribose 1-diphosphate contacts are provided by residues arginine 78, arginine 103, and 130-138 (DPMLATGGS). Uracil-binding positions include isoleucine 193 and 198–200 (GDA). Aspartate 199 provides a ligand contact to 5-phospho-alpha-D-ribose 1-diphosphate.

Belongs to the UPRTase family. Requires Mg(2+) as cofactor.

It carries out the reaction UMP + diphosphate = 5-phospho-alpha-D-ribose 1-diphosphate + uracil. Its pathway is pyrimidine metabolism; UMP biosynthesis via salvage pathway; UMP from uracil: step 1/1. With respect to regulation, allosterically activated by GTP. In terms of biological role, catalyzes the conversion of uracil and 5-phospho-alpha-D-ribose 1-diphosphate (PRPP) to UMP and diphosphate. This Shewanella sediminis (strain HAW-EB3) protein is Uracil phosphoribosyltransferase.